We begin with the raw amino-acid sequence, 616 residues long: Dihydroxy-acid dehydratase (616 aa).

Mg(2+) is bound at residue aspartate 81. A [2Fe-2S] cluster-binding site is contributed by cysteine 122. Positions 123 and 124 each coordinate Mg(2+). An N6-carboxylysine modification is found at lysine 124. Cysteine 195 is a [2Fe-2S] cluster binding site. Glutamate 491 is a binding site for Mg(2+). The Proton acceptor role is filled by serine 517.

This sequence belongs to the IlvD/Edd family. Homodimer. [2Fe-2S] cluster is required as a cofactor. Requires Mg(2+) as cofactor.

The catalysed reaction is (2R)-2,3-dihydroxy-3-methylbutanoate = 3-methyl-2-oxobutanoate + H2O. It carries out the reaction (2R,3R)-2,3-dihydroxy-3-methylpentanoate = (S)-3-methyl-2-oxopentanoate + H2O. The protein operates within amino-acid biosynthesis; L-isoleucine biosynthesis; L-isoleucine from 2-oxobutanoate: step 3/4. It functions in the pathway amino-acid biosynthesis; L-valine biosynthesis; L-valine from pyruvate: step 3/4. Functionally, functions in the biosynthesis of branched-chain amino acids. Catalyzes the dehydration of (2R,3R)-2,3-dihydroxy-3-methylpentanoate (2,3-dihydroxy-3-methylvalerate) into 2-oxo-3-methylpentanoate (2-oxo-3-methylvalerate) and of (2R)-2,3-dihydroxy-3-methylbutanoate (2,3-dihydroxyisovalerate) into 2-oxo-3-methylbutanoate (2-oxoisovalerate), the penultimate precursor to L-isoleucine and L-valine, respectively. The protein is Dihydroxy-acid dehydratase of Escherichia coli O7:K1 (strain IAI39 / ExPEC).